A 463-amino-acid polypeptide reads, in one-letter code: Elongation factor 1-alpha 2 (463 aa).

Gly-2 carries the post-translational modification N,N,N-trimethylglycine. The tr-type G domain occupies 5–242 (KTHINIVVIG…DTILPPTRPT (238 aa)). The segment at 14-21 (GHVDSGKS) is G1. Residues Asp-17, Ser-18, Gly-19, Lys-20, Ser-21, and Thr-22 each coordinate GTP. Asp-17 provides a ligand contact to Mg(2+). Lys-36 bears the N6,N6,N6-trimethyllysine; alternate mark. N6,N6-dimethyllysine; alternate is present on Lys-36. Lys-36 carries the post-translational modification N6-methyllysine; alternate. Lys-55 carries the post-translational modification N6,N6,N6-trimethyllysine. Position 55 is an N6,N6-dimethyllysine (Lys-55). The tract at residues 70-74 (GITID) is G2. At Lys-79 the chain carries N6,N6,N6-trimethyllysine. Residues 91-94 (DAPG) form a G3 region. GTP-binding residues include Asn-153, Lys-154, and Asp-156. The segment at 153-156 (NKMD) is G4. Ser-163 is modified (phosphoserine). The residue at position 165 (Lys-165) is an N6,N6-dimethyllysine; alternate. Lys-165 carries the post-translational modification N6-methyllysine; alternate. The residue at position 165 (Lys-165) is an N6,N6,N6-trimethyllysine; alternate; by EEF1AKMT3. Position 179 is an N6-acetyllysine (Lys-179). 3 residues coordinate GTP: Ser-194, Gly-195, and Trp-196. Residues 194-196 (SGW) are G5. Ser-224 bears the Phosphoserine mark. Thr-239 bears the Phosphothreonine mark. 5-glutamyl glycerylphosphorylethanolamine occurs at positions 301 and 374. N6-acetyllysine is present on Lys-439. The disordered stretch occupies residues 444-463 (KSGGAGKVTKSAQKAQKAGK).

It belongs to the TRAFAC class translation factor GTPase superfamily. Classic translation factor GTPase family. EF-Tu/EF-1A subfamily. Homodimer; arranged in a 'head to tail' dimer configuration. Trimethylated at Lys-165 by EEF1AKMT3. Mono-, di-, and trimethylated at Lys-36 by EEF1AKMT4; trimethylated form is predominant. Methylation by EEF1AKMT4 contributes to the fine-tuning of translation rates for a subset of tRNAs. Trimethylated at the N-terminus and dimethylated at Lys-55 by METTL13.

Its subcellular location is the endoplasmic reticulum membrane. It carries out the reaction GTP + H2O = GDP + phosphate + H(+). Functionally, translation elongation factor that catalyzes the GTP-dependent binding of aminoacyl-tRNA (aa-tRNA) to the A-site of ribosomes during the elongation phase of protein synthesis. Base pairing between the mRNA codon and the aa-tRNA anticodon promotes GTP hydrolysis, releasing the aa-tRNA from EEF1A1 and allowing its accommodation into the ribosome. The growing protein chain is subsequently transferred from the P-site peptidyl tRNA to the A-site aa-tRNA, extending it by one amino acid through ribosome-catalyzed peptide bond formation. The polypeptide is Elongation factor 1-alpha 2 (EEF1A2) (Bos taurus (Bovine)).